The primary structure comprises 500 residues: ATP synthase subunit alpha (500 aa).

169-176 (GDRQTGKT) is a binding site for ATP.

The protein belongs to the ATPase alpha/beta chains family. In terms of assembly, F-type ATPases have 2 components, CF(1) - the catalytic core - and CF(0) - the membrane proton channel. CF(1) has five subunits: alpha(3), beta(3), gamma(1), delta(1), epsilon(1). CF(0) has three main subunits: a(1), b(2) and c(9-12). The alpha and beta chains form an alternating ring which encloses part of the gamma chain. CF(1) is attached to CF(0) by a central stalk formed by the gamma and epsilon chains, while a peripheral stalk is formed by the delta and b chains.

It is found in the cell membrane. It carries out the reaction ATP + H2O + 4 H(+)(in) = ADP + phosphate + 5 H(+)(out). Functionally, produces ATP from ADP in the presence of a proton gradient across the membrane. The alpha chain is a regulatory subunit. This Clostridioides difficile (strain 630) (Peptoclostridium difficile) protein is ATP synthase subunit alpha.